A 380-amino-acid chain; its full sequence is Crotonobetainyl-CoA reductase (380 aa).

Belongs to the acyl-CoA dehydrogenase family. In terms of assembly, homotetramer. Requires FAD as cofactor.

The protein localises to the cytoplasm. The catalysed reaction is 4-(trimethylamino)butanoyl-CoA + oxidized [electron-transfer flavoprotein] + H(+) = crotonobetainyl-CoA + reduced [electron-transfer flavoprotein]. It functions in the pathway amine and polyamine metabolism; carnitine metabolism. Its function is as follows. Catalyzes the reduction of crotonobetainyl-CoA to gamma-butyrobetainyl-CoA. In Shigella flexneri serotype 5b (strain 8401), this protein is Crotonobetainyl-CoA reductase.